A 380-amino-acid chain; its full sequence is Queuine tRNA-ribosyltransferase (380 aa).

The active-site Proton acceptor is the Asp-96. Substrate is bound by residues 96 to 100 (DSGGF), Asp-150, Gln-193, and Gly-220. Positions 251–257 (GVGAPDS) are RNA binding. The Nucleophile role is filled by Asp-270. Residues 275–279 (TRIAR) form an RNA binding; important for wobble base 34 recognition region. Residues Cys-308, Cys-310, Cys-313, and His-339 each contribute to the Zn(2+) site.

The protein belongs to the queuine tRNA-ribosyltransferase family. Homodimer. Within each dimer, one monomer is responsible for RNA recognition and catalysis, while the other monomer binds to the replacement base PreQ1. Requires Zn(2+) as cofactor.

It carries out the reaction 7-aminomethyl-7-carbaguanine + guanosine(34) in tRNA = 7-aminomethyl-7-carbaguanosine(34) in tRNA + guanine. The protein operates within tRNA modification; tRNA-queuosine biosynthesis. Catalyzes the base-exchange of a guanine (G) residue with the queuine precursor 7-aminomethyl-7-deazaguanine (PreQ1) at position 34 (anticodon wobble position) in tRNAs with GU(N) anticodons (tRNA-Asp, -Asn, -His and -Tyr). Catalysis occurs through a double-displacement mechanism. The nucleophile active site attacks the C1' of nucleotide 34 to detach the guanine base from the RNA, forming a covalent enzyme-RNA intermediate. The proton acceptor active site deprotonates the incoming PreQ1, allowing a nucleophilic attack on the C1' of the ribose to form the product. After dissociation, two additional enzymatic reactions on the tRNA convert PreQ1 to queuine (Q), resulting in the hypermodified nucleoside queuosine (7-(((4,5-cis-dihydroxy-2-cyclopenten-1-yl)amino)methyl)-7-deazaguanosine). This Streptococcus thermophilus (strain ATCC BAA-491 / LMD-9) protein is Queuine tRNA-ribosyltransferase.